The primary structure comprises 152 residues: Small integral membrane protein 28 (152 aa).

Residues 52 to 72 (FLCILLPATILLFLAFLLLFL) form a helical membrane-spanning segment. The segment at 117–152 (PLPPEATLPSQCLPPSYEEATRNPPGEEAQGCSPSV) is disordered.

Its subcellular location is the membrane. The sequence is that of Small integral membrane protein 28 from Homo sapiens (Human).